Reading from the N-terminus, the 341-residue chain is Eukaryotic translation initiation factor 3 subunit I (341 aa).

WD repeat units lie at residues 8–47 (GHERSLNQIVFNSEGDLLFSASKDSVVNAWYTSNGERLGT), 56–95 (GHNGSVWTVAVDSQTRFLLTGGADNAMKLWEVKTGECLYT), 151–190 (LSGSRATVAIWAPLSDYIITGHESGKIAKYDVKTGEEVQA), 194–233 (EHSALISDIQLSPDGTYFITASKDKTARLWDIETLEVMKV), 235–274 (TTETPVNSAVITPDRPYIILGGGQDAMNVTTTSQRAGKFE), and 291–331 (GHFG…RSRP).

The protein belongs to the eIF-3 subunit I family. As to quaternary structure, component of the eukaryotic translation initiation factor 3 (eIF-3) complex.

It is found in the cytoplasm. Component of the eukaryotic translation initiation factor 3 (eIF-3) complex, which is involved in protein synthesis of a specialized repertoire of mRNAs and, together with other initiation factors, stimulates binding of mRNA and methionyl-tRNAi to the 40S ribosome. The eIF-3 complex specifically targets and initiates translation of a subset of mRNAs involved in cell proliferation. The polypeptide is Eukaryotic translation initiation factor 3 subunit I (Cryptococcus neoformans var. neoformans serotype D (strain B-3501A) (Filobasidiella neoformans)).